The sequence spans 341 residues: S-adenosylmethionine:tRNA ribosyltransferase-isomerase (341 aa).

Belongs to the QueA family. As to quaternary structure, monomer.

It is found in the cytoplasm. The enzyme catalyses 7-aminomethyl-7-carbaguanosine(34) in tRNA + S-adenosyl-L-methionine = epoxyqueuosine(34) in tRNA + adenine + L-methionine + 2 H(+). The protein operates within tRNA modification; tRNA-queuosine biosynthesis. Functionally, transfers and isomerizes the ribose moiety from AdoMet to the 7-aminomethyl group of 7-deazaguanine (preQ1-tRNA) to give epoxyqueuosine (oQ-tRNA). This Citrifermentans bemidjiense (strain ATCC BAA-1014 / DSM 16622 / JCM 12645 / Bem) (Geobacter bemidjiensis) protein is S-adenosylmethionine:tRNA ribosyltransferase-isomerase.